We begin with the raw amino-acid sequence, 145 residues long: Bacilliredoxin SERP1006 (145 aa).

The protein belongs to the bacilliredoxin family.

This chain is Bacilliredoxin SERP1006, found in Staphylococcus epidermidis (strain ATCC 35984 / DSM 28319 / BCRC 17069 / CCUG 31568 / BM 3577 / RP62A).